The primary structure comprises 142 residues: Putative pre-16S rRNA nuclease (142 aa).

It belongs to the YqgF nuclease family.

The protein localises to the cytoplasm. In terms of biological role, could be a nuclease involved in processing of the 5'-end of pre-16S rRNA. The sequence is that of Putative pre-16S rRNA nuclease from Staphylococcus aureus (strain bovine RF122 / ET3-1).